Consider the following 205-residue polypeptide: Delta-aminolevulinic acid dehydratase (205 aa).

The Zn(2+) site is built by C117, C119, and C127. The active-site Schiff-base intermediate with substrate is K192. Substrate is bound at residue R202.

Belongs to the ALAD family. As to quaternary structure, homooctamer. The cofactor is Zn(2+).

The enzyme catalyses 2 5-aminolevulinate = porphobilinogen + 2 H2O + H(+). Its pathway is porphyrin-containing compound metabolism; protoporphyrin-IX biosynthesis; coproporphyrinogen-III from 5-aminolevulinate: step 1/4. Catalyzes an early step in the biosynthesis of tetrapyrroles. Binds two molecules of 5-aminolevulinate per subunit, each at a distinct site, and catalyzes their condensation to form porphobilinogen. The polypeptide is Delta-aminolevulinic acid dehydratase (hemB) (Ruminiclostridium josui (Clostridium josui)).